A 239-amino-acid chain; its full sequence is 1-(5-phosphoribosyl)-5-[(5-phosphoribosylamino)methylideneamino] imidazole-4-carboxamide isomerase (239 aa).

Aspartate 8 serves as the catalytic Proton acceptor. The active-site Proton donor is aspartate 129.

Belongs to the HisA/HisF family.

Its subcellular location is the cytoplasm. The enzyme catalyses 1-(5-phospho-beta-D-ribosyl)-5-[(5-phospho-beta-D-ribosylamino)methylideneamino]imidazole-4-carboxamide = 5-[(5-phospho-1-deoxy-D-ribulos-1-ylimino)methylamino]-1-(5-phospho-beta-D-ribosyl)imidazole-4-carboxamide. It functions in the pathway amino-acid biosynthesis; L-histidine biosynthesis; L-histidine from 5-phospho-alpha-D-ribose 1-diphosphate: step 4/9. This Bacillus cereus (strain ZK / E33L) protein is 1-(5-phosphoribosyl)-5-[(5-phosphoribosylamino)methylideneamino] imidazole-4-carboxamide isomerase.